A 177-amino-acid chain; its full sequence is PBAN-type neuropeptides (177 aa).

Positions 1–23 are cleaved as a signal peptide; the sequence is MIVTGNPVCAIALLLCLVFRASG. Residues 24 to 54 constitute a propeptide that is removed on maturation; the sequence is EYELEMSSGGSNDGRSPSNDFGSCTDGKCTK. A disordered region spans residues 28–73; it reads EMSSGGSNDGRSPSNDFGSCTDGKCTKRTTTTQESGISSGMWFGPR. The segment covering 31 to 45 has biased composition (polar residues); that stretch reads SGGSNDGRSPSNDFG. Low complexity predominate over residues 47 to 59; it reads CTDGKCTKRTTTT. At L74 the chain carries Leucine amide. A propeptide spanning residues 78 to 113 is cleaved from the precursor; sequence HKSNEKQQINPEIEMLVNALDQPGMRWTVITIPANE. 3 positions are modified to leucine amide: L124, L154, and L166. A propeptide spanning residues 169-177 is cleaved from the precursor; the sequence is QSRSVSRKI.

Belongs to the pyrokinin family. Pyrokinins (PK) 1 to 4 are expressed in the retrocerebral complex. PK 1 is expressed in central brain, anntennal lobes and abominal ganglia. PK 2 is expressed in optical lobes and in gnathal, thoracic and abdominal ganglia. PK 3 is expressed in optical lobes and in thoracic and abdominal ganglia (at protein level).

The protein localises to the secreted. Functionally, pyrokinins mediate visceral muscle contractile activity (myotropic activity). In Camponotus floridanus (Florida carpenter ant), this protein is PBAN-type neuropeptides.